The sequence spans 80 residues: Small ribosomal subunit protein bS18 (80 aa).

The protein belongs to the bacterial ribosomal protein bS18 family. Part of the 30S ribosomal subunit. Forms a tight heterodimer with protein bS6.

In terms of biological role, binds as a heterodimer with protein bS6 to the central domain of the 16S rRNA, where it helps stabilize the platform of the 30S subunit. The sequence is that of Small ribosomal subunit protein bS18 from Beijerinckia indica subsp. indica (strain ATCC 9039 / DSM 1715 / NCIMB 8712).